A 30-amino-acid chain; its full sequence is Methanobactin mb-OB3b (30 aa).

A propeptide spanning residues 1-19 (MTVKIAQKKVLPVIGRAAA) is cleaved from the precursor. The segment at residues 20 to 21 (LC) is a cross-link (2-(3-methylbutanoyl)-5-hydroxyoxazole-4-carbothionic acid (Leu-Cys)). Positions 21 and 27 each coordinate Cu(2+). Residues Cys-24 and Cys-29 are joined by a disulfide bond. The proline 5-hydroxy-oxazole-4-carbothionic acid (Pro-Cys) cross-link spans 26-27 (PC).

Monomer. In the absence of copper, may exist as a dimer or an oligomer.

The protein localises to the secreted. It localises to the cytoplasm. The catalysed reaction is 2 superoxide + 2 H(+) = H2O2 + O2. In terms of biological role, chalkophore involved in scavenging, uptake and suppression of toxicity of copper. Each apo-methanobactin (apo-mb) complexes 1 Cu(2+) or Cu(1+) ion to form Cu(1+)-mb (Cu-mb) which is then taken up by the cell. Enhances growth rate in the presence of copper and reduces growth lag upon exposition to elevated levels of copper. Cu-mb contributes to the switchover from soluble methane monooxygenase (sMMO) to the membrane-bound particulate MMO (pMMO) by inducing transcription of pMMO subunit A. It also stimulates the enzymatic activity of pMMO. In the absence of copper, binds other metal ions, like Zn(2+), Ag(1+), Au(3+), Co(2+), Cd(2+), Fe(3+), Hg(2+), Mn(2+), Ni(2+), Pb(2+) or U(6+), but not Ba(2+), Ca(2+), La(2+), Mg(2+) or Sr(2+). Uptake is an active process, which may involve TonB-dependent transporters, and as such does not involve porins. Cu-Mb can be taken up by other methanotrophic bacteria but not by E.coli. Has Cu-dependent superoxide dismutase-like activity. Shows reductant-dependent oxidase and hydrogen peroxide reductase activities. Reduces copper-levels in liver in a rat model of Wilson disease. The protein is Methanobactin mb-OB3b of Methylosinus trichosporium.